The primary structure comprises 1077 residues: Hemoglobin and hemoglobin-haptoglobin-binding protein A (1077 aa).

A signal peptide spans 1–24; sequence MTNFRLNVLAYSVMLGLTASVAYA. The disordered stretch occupies residues 25 to 72; that stretch reads EPTNQPTNQPTNQPTNQPTNQPTNQPTNQPTNQPTNQPTNQPTNQNSN. 11 repeat units span residues 26-29, 30-33, 34-37, 38-41, 42-45, 46-49, 50-53, 54-57, 58-61, 62-65, and 66-69. The 11 X 4 AA tandem repeats of P-T-N-Q stretch occupies residues 26–69; that stretch reads PTNQPTNQPTNQPTNQPTNQPTNQPTNQPTNQPTNQPTNQPTNQ. Residues 26-70 show a composition bias toward low complexity; that stretch reads PTNQPTNQPTNQPTNQPTNQPTNQPTNQPTNQPTNQPTNQPTNQN. Positions 78–85 match the TonB box motif; it reads EQINVSGS. Residues 89–216 enclose the TBDR plug domain; the sequence is TDTKAPPKIA…LGGSVSLDTK (128 aa). One can recognise a TBDR beta-barrel domain in the interval 224-1077; it reads NKNYYASYKR…NYRMSVQFEF (854 aa). Positions 1060–1077 match the TonB C-terminal box motif; it reads NRFYAPERNYRMSVQFEF.

This sequence belongs to the TonB-dependent receptor family. Hemoglobin/haptoglobin binding protein subfamily.

The protein localises to the cell outer membrane. In terms of biological role, acts as a receptor for hemoglobin or the hemoglobin/haptoglobin complex of the human host and is required for heme uptake. In Haemophilus influenzae, this protein is Hemoglobin and hemoglobin-haptoglobin-binding protein A (hgpA).